The following is a 130-amino-acid chain: Mitochondrial import protein 1 (130 aa).

A disordered region spans residues 1–41 (MSAEEISNPLAESGVTISSDSEQYSAPESASPQSPSSSSPA). A compositionally biased stretch (polar residues) spans 15 to 24 (VTISSDSEQY). Over residues 25-41 (SAPESASPQSPSSSSPA) the composition is skewed to low complexity.

Belongs to the MIM1 family.

The protein localises to the mitochondrion outer membrane. Required for the assembly of the TOM (translocase of outer membrane) receptor complex, which is responsible for the recognition and translocation of cytosolically synthesized mitochondrial preproteins. The polypeptide is Mitochondrial import protein 1 (Neurospora crassa (strain ATCC 24698 / 74-OR23-1A / CBS 708.71 / DSM 1257 / FGSC 987)).